Reading from the N-terminus, the 513-residue chain is Histidine ammonia-lyase (513 aa).

The 5-imidazolinone (Ala-Gly) cross-link spans alanine 144–glycine 146. Serine 145 bears the 2,3-didehydroalanine (Ser) mark.

The protein belongs to the PAL/histidase family. Post-translationally, contains an active site 4-methylidene-imidazol-5-one (MIO), which is formed autocatalytically by cyclization and dehydration of residues Ala-Ser-Gly.

The protein resides in the cytoplasm. It catalyses the reaction L-histidine = trans-urocanate + NH4(+). It participates in amino-acid degradation; L-histidine degradation into L-glutamate; N-formimidoyl-L-glutamate from L-histidine: step 1/3. This chain is Histidine ammonia-lyase, found in Streptococcus pyogenes serotype M3 (strain ATCC BAA-595 / MGAS315).